The primary structure comprises 304 residues: Ribosomal RNA small subunit methyltransferase H (304 aa).

S-adenosyl-L-methionine is bound by residues 36 to 38 (GGH), D53, F79, D98, and Q105.

This sequence belongs to the methyltransferase superfamily. RsmH family.

The protein localises to the cytoplasm. The catalysed reaction is cytidine(1402) in 16S rRNA + S-adenosyl-L-methionine = N(4)-methylcytidine(1402) in 16S rRNA + S-adenosyl-L-homocysteine + H(+). Functionally, specifically methylates the N4 position of cytidine in position 1402 (C1402) of 16S rRNA. The protein is Ribosomal RNA small subunit methyltransferase H of Myxococcus xanthus (strain DK1622).